Consider the following 242-residue polypeptide: Small ribosomal subunit protein uS2 (242 aa).

This sequence belongs to the universal ribosomal protein uS2 family.

The protein is Small ribosomal subunit protein uS2 of Shouchella clausii (strain KSM-K16) (Alkalihalobacillus clausii).